The primary structure comprises 334 residues: Probable fructose-bisphosphate aldolase class 1 (334 aa).

This sequence belongs to the class I fructose-bisphosphate aldolase family.

The catalysed reaction is beta-D-fructose 1,6-bisphosphate = D-glyceraldehyde 3-phosphate + dihydroxyacetone phosphate. It participates in carbohydrate degradation; glycolysis; D-glyceraldehyde 3-phosphate and glycerone phosphate from D-glucose: step 4/4. This chain is Probable fructose-bisphosphate aldolase class 1, found in Xanthomonas axonopodis pv. citri (strain 306).